A 98-amino-acid chain; its full sequence is NADH-ubiquinone oxidoreductase chain 4L (98 aa).

3 helical membrane-spanning segments follow: residues 1–21 (MSITTLNIMVAFTMALLGMFT), 29–49 (SLLCLEGMMLSLFMLATIVSL), and 61–81 (VILLVFAACEAAVGLALLVMV).

It belongs to the complex I subunit 4L family. Core subunit of respiratory chain NADH dehydrogenase (Complex I) which is composed of 45 different subunits.

It is found in the mitochondrion inner membrane. It carries out the reaction a ubiquinone + NADH + 5 H(+)(in) = a ubiquinol + NAD(+) + 4 H(+)(out). In terms of biological role, core subunit of the mitochondrial membrane respiratory chain NADH dehydrogenase (Complex I) which catalyzes electron transfer from NADH through the respiratory chain, using ubiquinone as an electron acceptor. Part of the enzyme membrane arm which is embedded in the lipid bilayer and involved in proton translocation. The polypeptide is NADH-ubiquinone oxidoreductase chain 4L (MT-ND4L) (Ochotona collaris (Collared pika)).